A 399-amino-acid chain; its full sequence is Small ribosomal subunit protein uS3m (399 aa).

The protein belongs to the universal ribosomal protein uS3 family.

It is found in the mitochondrion. In terms of biological role, essential for mitochondrial protein synthesis and required for the maturation of small ribosomal subunits. The protein is Small ribosomal subunit protein uS3m of Penicillium urticae.